The primary structure comprises 86 residues: HssA/B-like protein 60 (86 aa).

A disordered region spans residues 11 to 33; that stretch reads GNIKSSSKSNIASSSSSSSSQSL.

Belongs to the hssA/B family.

This Dictyostelium discoideum (Social amoeba) protein is HssA/B-like protein 60 (hssl60).